The chain runs to 695 residues: GATA zinc finger domain-containing protein 16 (695 aa).

Disordered regions lie at residues 82–111, 134–304, and 422–472; these read SPIL…SNNA, VVNS…QQDK, and NNQF…KMRY. Low complexity-rich tracts occupy residues 87-111 and 140-149; these read SQQQ…SNNA and KTTTTNNKPP. Residues 150-174 are a coiled coil; it reads KQSKRKEKERLEEEKQTVAQQQQYQ. Residues 155 to 165 show a composition bias toward basic and acidic residues; that stretch reads KEKERLEEEKQ. Residues 199 to 209 show a composition bias toward polar residues; the sequence is VSTTPYGNSQF. Residues 210–298 show a composition bias toward low complexity; that stretch reads NNNNNNNNNN…NSNSNNNNNN (89 aa). Positions 422-433 are enriched in polar residues; that stretch reads NNQFSGDKQSAL. The segment covering 434-446 has biased composition (low complexity); sequence NNVKNSKGGNTNN. The GATA-type zinc-finger motif lies at 479 to 504; it reads CHTCGVTNTPEWRRGPNGAKTLCNAC. Residues 523–646 are disordered; sequence NSTGVNITEP…TTNSITTPTT (124 aa). Low complexity-rich tracts occupy residues 544-556 and 564-646; these read DNNN…SDSN and GSNN…TPTT.

The sequence is that of GATA zinc finger domain-containing protein 16 (gtaP) from Dictyostelium discoideum (Social amoeba).